A 227-amino-acid chain; its full sequence is Cytochrome c oxidase subunit 2 (227 aa).

Residues 1-14 lie on the Mitochondrial intermembrane side of the membrane; sequence MAYPLQLGFQDATS. The chain crosses the membrane as a helical span at residues 15-45; it reads PVMEELLHFHDHTLMIIFLISSLVLYIIMLM. Topologically, residues 46–59 are mitochondrial matrix; sequence LTTKLVHTNMMNVQ. The helical transmembrane segment at 60–87 threads the bilayer; sequence EMEMIWTILPAIILILIALPSLHTLYMM. The Mitochondrial intermembrane segment spans residues 88–227; it reads DEINNPLLTI…YFESWSASLA (140 aa). Cu cation-binding residues include His-161, Cys-196, Glu-198, Cys-200, His-204, and Met-207. Glu-198 contacts Mg(2+). Tyr-218 is subject to Phosphotyrosine.

This sequence belongs to the cytochrome c oxidase subunit 2 family. As to quaternary structure, component of the cytochrome c oxidase (complex IV, CIV), a multisubunit enzyme composed of 14 subunits. The complex is composed of a catalytic core of 3 subunits MT-CO1, MT-CO2 and MT-CO3, encoded in the mitochondrial DNA, and 11 supernumerary subunits COX4I, COX5A, COX5B, COX6A, COX6B, COX6C, COX7A, COX7B, COX7C, COX8 and NDUFA4, which are encoded in the nuclear genome. The complex exists as a monomer or a dimer and forms supercomplexes (SCs) in the inner mitochondrial membrane with NADH-ubiquinone oxidoreductase (complex I, CI) and ubiquinol-cytochrome c oxidoreductase (cytochrome b-c1 complex, complex III, CIII), resulting in different assemblies (supercomplex SCI(1)III(2)IV(1) and megacomplex MCI(2)III(2)IV(2)). Found in a complex with TMEM177, COA6, COX18, COX20, SCO1 and SCO2. Interacts with TMEM177 in a COX20-dependent manner. Interacts with COX20. Interacts with COX16. It depends on Cu cation as a cofactor.

Its subcellular location is the mitochondrion inner membrane. It catalyses the reaction 4 Fe(II)-[cytochrome c] + O2 + 8 H(+)(in) = 4 Fe(III)-[cytochrome c] + 2 H2O + 4 H(+)(out). Component of the cytochrome c oxidase, the last enzyme in the mitochondrial electron transport chain which drives oxidative phosphorylation. The respiratory chain contains 3 multisubunit complexes succinate dehydrogenase (complex II, CII), ubiquinol-cytochrome c oxidoreductase (cytochrome b-c1 complex, complex III, CIII) and cytochrome c oxidase (complex IV, CIV), that cooperate to transfer electrons derived from NADH and succinate to molecular oxygen, creating an electrochemical gradient over the inner membrane that drives transmembrane transport and the ATP synthase. Cytochrome c oxidase is the component of the respiratory chain that catalyzes the reduction of oxygen to water. Electrons originating from reduced cytochrome c in the intermembrane space (IMS) are transferred via the dinuclear copper A center (CU(A)) of subunit 2 and heme A of subunit 1 to the active site in subunit 1, a binuclear center (BNC) formed by heme A3 and copper B (CU(B)). The BNC reduces molecular oxygen to 2 water molecules using 4 electrons from cytochrome c in the IMS and 4 protons from the mitochondrial matrix. This is Cytochrome c oxidase subunit 2 (MT-CO2) from Mammuthus primigenius (Siberian woolly mammoth).